The chain runs to 316 residues: Protein C4 (316 aa).

This sequence belongs to the poxviridae OPG031 protein family.

Its subcellular location is the host cytoplasm. The protein resides in the host nucleus. Functionally, plays a role in the inhibition of host NF-kappa-B activation. Mechanistically, blocks the subunit p65/RELA translocation into the host nucleus. The protein is Protein C4 (OPG031) of Vaccinia virus (strain Western Reserve) (VACV).